Consider the following 335-residue polypeptide: Transmembrane protein 120B (335 aa).

The stretch at 1 to 39 (MSLQKCQEEWGELEKEFQQLQETHKVYKQKLEELNGLQN) forms a coiled coil. The next 6 helical transmembrane spans lie at 100-122 (GLYL…AKFA), 130-150 (FKLY…FVLH), 157-177 (VFNF…SILI), 193-213 (VSTF…YQIF), 268-288 (FLLP…ITLF), and 300-320 (QVFV…LTTL).

The protein belongs to the TMEM120 family.

The protein localises to the nucleus inner membrane. Its function is as follows. Necessary for efficient adipogenesis. Does not show ion channel activity. The protein is Transmembrane protein 120B (tmem120b) of Xenopus tropicalis (Western clawed frog).